The sequence spans 53 residues: Lantibiotic mutacin-2 (53 aa).

A propeptide spanning residues 1 to 26 (MNKLNSNAVVSLNEVSDSELDTILGG) is cleaved from the precursor. Positions 36–41 (TVSYEC) form a cross-link, beta-methyllanthionine (Thr-Cys). 2 cross-links (lanthionine (Ser-Cys)) span residues 38–52 (SYEC…VFTC) and 45–53 (SWQHVFTCC). The residue at position 51 (threonine 51) is a 2,3-didehydrobutyrine.

Post-translationally, maturation of lantibiotics involves the enzymatic conversion of Thr, and Ser into dehydrated AA and the formation of thioether bonds with cysteine. This is followed by membrane translocation and cleavage of the modified precursor. It is not established whether the 2,3-didehydrobutyrine is the E- or Z-isomer.

Functionally, lanthionine-containing peptide antibiotic (lantibiotic) active on Gram-positive bacteria including M.luteus, S.aureus, Streptococcus, P.micros, P.acidilactici, C.sporogenes, C.diphtheriae, A.viscosus, G.vaginalis, P.acnes, L.monocytogenes and M.smegmatis, and Gram-negative bacteria including C.jejuni, H.pylori and N.gonorrhoeae. Transiently and partially depolarizes the transmembrane electrical potential and pH gradient of susceptible cells, inhibits the uptake of amino acids and depletes the intracellular ATP pool. This chain is Lantibiotic mutacin-2, found in Streptococcus mutans.